Here is a 296-residue protein sequence, read N- to C-terminus: Beta-lactamase (296 aa).

The signal sequence occupies residues 1–21 (MKAYFIAILTLFTCIATVVRA). The active-site Acyl-ester intermediate is the Ser66. 235–237 (KTG) is a binding site for substrate.

The protein belongs to the class-A beta-lactamase family.

It catalyses the reaction a beta-lactam + H2O = a substituted beta-amino acid. This is Beta-lactamase (cblA) from Bacteroides uniformis.